A 680-amino-acid polypeptide reads, in one-letter code: DNA-directed RNA polymerase subunit beta' (680 aa).

Zn(2+) contacts are provided by Cys69, Cys71, Cys87, and Cys90. 3 residues coordinate Mg(2+): Asp489, Asp491, and Asp493.

It belongs to the RNA polymerase beta' chain family. RpoC1 subfamily. As to quaternary structure, in plastids the minimal PEP RNA polymerase catalytic core is composed of four subunits: alpha, beta, beta', and beta''. When a (nuclear-encoded) sigma factor is associated with the core the holoenzyme is formed, which can initiate transcription. Requires Mg(2+) as cofactor. It depends on Zn(2+) as a cofactor.

Its subcellular location is the plastid. The protein localises to the chloroplast. The enzyme catalyses RNA(n) + a ribonucleoside 5'-triphosphate = RNA(n+1) + diphosphate. DNA-dependent RNA polymerase catalyzes the transcription of DNA into RNA using the four ribonucleoside triphosphates as substrates. The sequence is that of DNA-directed RNA polymerase subunit beta' from Arabidopsis thaliana (Mouse-ear cress).